The primary structure comprises 121 residues: Two-component response regulator ORR8 (121 aa).

The region spanning 5–121 is the Response regulatory domain; the sequence is HVLVVDDTHV…VDVPRIMKYI (117 aa). A 4-aspartylphosphate modification is found at aspartate 55.

It belongs to the ARR family. Type-A subfamily. In terms of processing, two-component system major event consists of a His-to-Asp phosphorelay between a sensor histidine kinase (HK) and a response regulator (RR). In plants, the His-to-Asp phosphorelay involves an additional intermediate named Histidine-containing phosphotransfer protein (HPt). This multistep phosphorelay consists of a His-Asp-His-Asp sequential transfer of a phosphate group between first a His and an Asp of the HK protein, followed by the transfer to a conserved His of the HPt protein and finally the transfer to an Asp in the receiver domain of the RR protein. As to expression, expressed in mature leaves, and at low levels in roots, shoots and flowers.

Its function is as follows. Functions as a response regulator involved in His-to-Asp phosphorelay signal transduction system. Phosphorylation of the Asp residue in the receiver domain activates the ability of the protein to promote the transcription of target genes. Type-A response regulators seem to act as negative regulators of the cytokinin signaling. This Oryza sativa subsp. indica (Rice) protein is Two-component response regulator ORR8.